The following is a 149-amino-acid chain: Large ribosomal subunit protein bL9 (149 aa).

This sequence belongs to the bacterial ribosomal protein bL9 family.

Binds to the 23S rRNA. This is Large ribosomal subunit protein bL9 from Salinibacter ruber (strain DSM 13855 / M31).